Reading from the N-terminus, the 316-residue chain is Transaldolase (316 aa).

The active-site Schiff-base intermediate with substrate is Lys-132.

It belongs to the transaldolase family. Type 1 subfamily. Homodimer.

The protein resides in the cytoplasm. The enzyme catalyses D-sedoheptulose 7-phosphate + D-glyceraldehyde 3-phosphate = D-erythrose 4-phosphate + beta-D-fructose 6-phosphate. It participates in carbohydrate degradation; pentose phosphate pathway; D-glyceraldehyde 3-phosphate and beta-D-fructose 6-phosphate from D-ribose 5-phosphate and D-xylulose 5-phosphate (non-oxidative stage): step 2/3. Transaldolase is important for the balance of metabolites in the pentose-phosphate pathway. This is Transaldolase from Aliivibrio fischeri (strain ATCC 700601 / ES114) (Vibrio fischeri).